Consider the following 513-residue polypeptide: MAVSPTTMAAVRASGAVPNAEYLLSAEGVRKEFPGVVALDDVQFRLKRASVHALMGENGAGKSTLMKILAGIYTPDKGDIRLKGIEIQLKSPLDALENGIAMIHQELNLMPFMTVAENIWIRREPKNRLGFIDHGVMHRMTEELFTRLNIAIDPDIEVRFLSVANRQMVEIAKAVSYNSDVLIMDEPTSALTEREVEHLFRIIRDLKAQGIGIVYITHKMNELFEIADEFSVFRDGRYIGTHASTDVTRDDIIRMMVGREITQMFPKEEVPIGEVMLSVKDLCLNGVFKNVSFEVRAGEILGVAGLVGSGRSNVAETLFGVTPASSGSIELYGKPVAISSPTEAIRNRMAFLTEDRKDTGCLLILDILENMQIAVLQDRYVKGGFVQQGAVEATCEDMAKKLRVKTPNLYERVENLSGGNQQKVLIGRWLLTNPRILILDEPTRGIDVGAKAEIHRLVTEMARDGVAVVMISSEMPEVLGMSDRIMVMHEGRVTGFLNRDEATQIKVMELAAQ.

ABC transporter domains are found at residues L24 to E260 and V270 to L510. Residue G56–S63 participates in ATP binding.

This sequence belongs to the ABC transporter superfamily. Carbohydrate importer 2 (CUT2) (TC 3.A.1.2) family.

The protein resides in the cell inner membrane. It carries out the reaction D-ribose(out) + ATP + H2O = D-ribose(in) + ADP + phosphate + H(+). It catalyses the reaction D-galactose(out) + ATP + H2O = D-galactose(in) + ADP + phosphate + H(+). In terms of biological role, part of an ABC transporter complex involved in carbohydrate import. Could be involved in ribose, galactose and/or methyl galactoside import. Responsible for energy coupling to the transport system. This is Putative ribose/galactose/methyl galactoside import ATP-binding protein from Rhizobium johnstonii (strain DSM 114642 / LMG 32736 / 3841) (Rhizobium leguminosarum bv. viciae).